The chain runs to 206 residues: Ribonuclease HII (206 aa).

One can recognise an RNase H type-2 domain in the interval 22–206 (RFICGVDEAG…ISFLKNILSL (185 aa)). The a divalent metal cation site is built by Asp-28, Glu-29, and Asp-120.

It belongs to the RNase HII family. It depends on Mn(2+) as a cofactor. Requires Mg(2+) as cofactor.

The protein localises to the cytoplasm. The catalysed reaction is Endonucleolytic cleavage to 5'-phosphomonoester.. Functionally, endonuclease that specifically degrades the RNA of RNA-DNA hybrids. This chain is Ribonuclease HII, found in Caldicellulosiruptor bescii (strain ATCC BAA-1888 / DSM 6725 / KCTC 15123 / Z-1320) (Anaerocellum thermophilum).